The following is a 472-amino-acid chain: FAD-dependent monooxygenase ltmM (472 aa).

Residues 7 to 27 (VIIVGGSVAGLSLAHCLEKIG) form a helical membrane-spanning segment. The FAD site is built by E34, G48, and R107. N-linked (GlcNAc...) asparagine glycosylation is present at N186. FAD-binding residues include D306 and A319. The chain crosses the membrane as a helical span at residues 450-470 (IVYALYLVAAAAFILYCLSSL).

The protein belongs to the paxM FAD-dependent monooxygenase family. Requires FAD as cofactor.

The protein localises to the membrane. The protein operates within secondary metabolite biosynthesis. In terms of biological role, FAD-dependent monooxygenase; part of the gene cluster that mediates the biosynthesis of lolitrems, indole-diterpene mycotoxins that are potent tremorgens in mammals, and are synthesized by clavicipitaceous fungal endophytes in association with their grass hosts. The geranylgeranyl diphosphate (GGPP) synthase ltmG is proposed to catalyze the first step in lolitremB biosynthesis. LtmG catalyzes a series of iterative condensations of isopentenyl diphosphate (IPP) with dimethylallyl diphosphate (DMAPP), geranyl diphosphate (GPP), and farnesyl diphosphate (FPP), to form GGPP. GGPP then condenses with indole-3-glycerol phosphate to form 3-geranylgeranylindole, an acyclic intermediate, to be incorporated into paxilline. Either ltmG or ltmC could be responsible for this step, as both are putative prenyl transferases. The FAD-dependent monooxygenase ltmM then catalyzes the epoxidation of the two terminal alkenes of the geranylgeranyl moiety, which is subsequently cyclized by ltmB, to paspaline. The cytochrome P450 monooxygenases ltmQ and ltmP can sequentially oxidize paspaline to terpendole E and terpendole F. Alternatively, ltmP converts paspaline to an intermediate which is oxidized by ltmQ to terpendole F. LtmF, ltmK, ltmE and ltmJ appear to be unique to the epichloe endophytes. The prenyltransferase ltmF is involved in the 27-hydroxyl-O-prenylation. The cytochrome P450 monooxygenase ltmK is required for the oxidative acetal ring formation. The multi-functional prenyltransferase ltmE is required for C20- and C21-prenylations of the indole ring of paspalanes and acts together with the cytochrome P450 monooxygenase ltmJ to yield lolitremanes by multiple oxidations and ring closures. The stereoisomer pairs of lolitriol and lolitrem N or lolitrem B and lolitrem F may be attributed to variations in the way in which ring closure can occur under the action of ltmJ. While the major product of this pathway is lolitrem B, the prenyl transferases and cytochrome P450 monooxygenases identified in this pathway have a remarkable versatility in their regio- and stereo-specificities to generate a diverse range of metabolites that are products of a metabolic grid rather than a linear pathway. This chain is FAD-dependent monooxygenase ltmM (ltmM), found in Epichloe festucae var. lolii (Neotyphodium lolii).